The following is a 205-amino-acid chain: Small ribosomal subunit protein uS4 (205 aa).

An S4 RNA-binding domain is found at 103 to 173; the sequence is RRLQTIVMKK…LEKSKRAEAA (71 aa). The interval 174 to 205 is disordered; that stretch reads AREAAAEAAEAEQAAAQAAAPTPAPAAAAPKQ. Over residues 179 to 205 the composition is skewed to low complexity; it reads AEAAEAEQAAAQAAAPTPAPAAAAPKQ.

Belongs to the universal ribosomal protein uS4 family. Part of the 30S ribosomal subunit. Contacts protein S5. The interaction surface between S4 and S5 is involved in control of translational fidelity.

One of the primary rRNA binding proteins, it binds directly to 16S rRNA where it nucleates assembly of the body of the 30S subunit. Functionally, with S5 and S12 plays an important role in translational accuracy. This Cenarchaeum symbiosum (strain A) protein is Small ribosomal subunit protein uS4.